The primary structure comprises 384 residues: Tryptophan--tRNA ligase (384 aa).

Positions 81–89 (PSGPMHIGH) match the 'HIGH' region motif. The short motif at 252–256 (KMSAS) is the 'KMSKS' region element.

The protein belongs to the class-I aminoacyl-tRNA synthetase family.

It is found in the cytoplasm. The catalysed reaction is tRNA(Trp) + L-tryptophan + ATP = L-tryptophyl-tRNA(Trp) + AMP + diphosphate + H(+). The protein is Tryptophan--tRNA ligase of Thermococcus sibiricus (strain DSM 12597 / MM 739).